The sequence spans 123 residues: Small ribosomal subunit protein uS12 (123 aa).

Positions 1 to 31 (MPTINQLIRKPREAQKARDKAPALQASPQKR) are disordered. Over residues 10-21 (KPREAQKARDKA) the composition is skewed to basic and acidic residues. At D89 the chain carries 3-methylthioaspartic acid.

Belongs to the universal ribosomal protein uS12 family. Part of the 30S ribosomal subunit. Contacts proteins S8 and S17. May interact with IF1 in the 30S initiation complex.

With S4 and S5 plays an important role in translational accuracy. Functionally, interacts with and stabilizes bases of the 16S rRNA that are involved in tRNA selection in the A site and with the mRNA backbone. Located at the interface of the 30S and 50S subunits, it traverses the body of the 30S subunit contacting proteins on the other side and probably holding the rRNA structure together. The combined cluster of proteins S8, S12 and S17 appears to hold together the shoulder and platform of the 30S subunit. The protein is Small ribosomal subunit protein uS12 of Xanthobacter autotrophicus (strain ATCC BAA-1158 / Py2).